We begin with the raw amino-acid sequence, 962 residues long: Glycine dehydrogenase (decarboxylating) (962 aa).

Lysine 709 carries the post-translational modification N6-(pyridoxal phosphate)lysine.

It belongs to the GcvP family. In terms of assembly, the glycine cleavage system is composed of four proteins: P, T, L and H. It depends on pyridoxal 5'-phosphate as a cofactor.

The enzyme catalyses N(6)-[(R)-lipoyl]-L-lysyl-[glycine-cleavage complex H protein] + glycine + H(+) = N(6)-[(R)-S(8)-aminomethyldihydrolipoyl]-L-lysyl-[glycine-cleavage complex H protein] + CO2. In terms of biological role, the glycine cleavage system catalyzes the degradation of glycine. The P protein binds the alpha-amino group of glycine through its pyridoxal phosphate cofactor; CO(2) is released and the remaining methylamine moiety is then transferred to the lipoamide cofactor of the H protein. This chain is Glycine dehydrogenase (decarboxylating), found in Shewanella sp. (strain MR-4).